Here is a 129-residue protein sequence, read N- to C-terminus: Lysozyme C (129 aa).

The C-type lysozyme domain maps to 1 to 129 (KVYGRCELAA…VHAWIRGCRL (129 aa)). Disulfide bonds link C6/C127, C30/C115, C64/C80, and C76/C94. Residues E35 and D52 contribute to the active site.

It belongs to the glycosyl hydrolase 22 family. As to quaternary structure, monomer.

It localises to the secreted. The enzyme catalyses Hydrolysis of (1-&gt;4)-beta-linkages between N-acetylmuramic acid and N-acetyl-D-glucosamine residues in a peptidoglycan and between N-acetyl-D-glucosamine residues in chitodextrins.. Its function is as follows. Lysozymes have primarily a bacteriolytic function; those in tissues and body fluids are associated with the monocyte-macrophage system and enhance the activity of immunoagents. This Lophophorus impejanus (Himalayan monal pheasant) protein is Lysozyme C (LYZ).